The primary structure comprises 154 residues: Large ribosomal subunit protein uL13 (154 aa).

Belongs to the universal ribosomal protein uL13 family. Part of the 50S ribosomal subunit.

In terms of biological role, this protein is one of the early assembly proteins of the 50S ribosomal subunit, although it is not seen to bind rRNA by itself. It is important during the early stages of 50S assembly. The chain is Large ribosomal subunit protein uL13 from Brucella abortus (strain S19).